An 87-amino-acid polypeptide reads, in one-letter code: uncharacterized protein (87 aa).

The next 2 helical transmembrane spans lie at 10-30 (VAFT…FSIG) and 43-63 (GYYI…QKVT).

The protein resides in the cell membrane. This is an uncharacterized protein from Bacillus subtilis (strain 168).